The chain runs to 108 residues: MVTLLPIEGQEIHFFEILESECVLYTGWIERASGSSIYPEAKARLPLEALLGSNKEPMLPKETVLSLKRYNLGSSAMKRNVPGHVLQRPSYLTRIQVTLLCNSSAEAL.

The BH3-like motif lies at 5–12; sequence LPIEGQEI.

Ubiquitously expressed.

Its subcellular location is the cytoplasm. The protein localises to the mitochondrion. Its function is as follows. Functions as a proapoptotic molecule through the caspase-dependent mitochondrial pathway of cell death. The chain is BH3-like motif-containing cell death inducer (BLID) from Homo sapiens (Human).